Here is a 349-residue protein sequence, read N- to C-terminus: 4-hydroxy-3-methylbut-2-enyl diphosphate reductase (349 aa).

Cys18 provides a ligand contact to [4Fe-4S] cluster. Positions 47 and 83 each coordinate (2E)-4-hydroxy-3-methylbut-2-enyl diphosphate. Residues His47 and His83 each coordinate dimethylallyl diphosphate. Isopentenyl diphosphate contacts are provided by His47 and His83. Cys105 lines the [4Fe-4S] cluster pocket. (2E)-4-hydroxy-3-methylbut-2-enyl diphosphate is bound at residue His133. Residue His133 coordinates dimethylallyl diphosphate. His133 contributes to the isopentenyl diphosphate binding site. Residue Glu135 is the Proton donor of the active site. Thr174 contributes to the (2E)-4-hydroxy-3-methylbut-2-enyl diphosphate binding site. [4Fe-4S] cluster is bound at residue Cys204. 4 residues coordinate (2E)-4-hydroxy-3-methylbut-2-enyl diphosphate: Ser232, Ser233, Asn234, and Ser277. Dimethylallyl diphosphate-binding residues include Ser232, Ser233, Asn234, and Ser277. Residues Ser232, Ser233, Asn234, and Ser277 each contribute to the isopentenyl diphosphate site.

It belongs to the IspH family. Requires [4Fe-4S] cluster as cofactor.

The enzyme catalyses isopentenyl diphosphate + 2 oxidized [2Fe-2S]-[ferredoxin] + H2O = (2E)-4-hydroxy-3-methylbut-2-enyl diphosphate + 2 reduced [2Fe-2S]-[ferredoxin] + 2 H(+). The catalysed reaction is dimethylallyl diphosphate + 2 oxidized [2Fe-2S]-[ferredoxin] + H2O = (2E)-4-hydroxy-3-methylbut-2-enyl diphosphate + 2 reduced [2Fe-2S]-[ferredoxin] + 2 H(+). It functions in the pathway isoprenoid biosynthesis; dimethylallyl diphosphate biosynthesis; dimethylallyl diphosphate from (2E)-4-hydroxy-3-methylbutenyl diphosphate: step 1/1. Its pathway is isoprenoid biosynthesis; isopentenyl diphosphate biosynthesis via DXP pathway; isopentenyl diphosphate from 1-deoxy-D-xylulose 5-phosphate: step 6/6. In terms of biological role, catalyzes the conversion of 1-hydroxy-2-methyl-2-(E)-butenyl 4-diphosphate (HMBPP) into a mixture of isopentenyl diphosphate (IPP) and dimethylallyl diphosphate (DMAPP). Acts in the terminal step of the DOXP/MEP pathway for isoprenoid precursor biosynthesis. The protein is 4-hydroxy-3-methylbut-2-enyl diphosphate reductase of Bartonella bacilliformis (strain ATCC 35685 / KC583 / Herrer 020/F12,63).